Here is a 477-residue protein sequence, read N- to C-terminus: PTS system glucose-specific EIICB component (477 aa).

The Cytoplasmic portion of the chain corresponds to 1-14 (MFKNAFANLQKVGK). A PTS EIIC type-1 domain is found at 1–388 (MFKNAFANLQ…LDLKTPGRED (388 aa)). A helical membrane pass occupies residues 15–35 (SLMLPVSVLPIAGILLGVGSA). The Periplasmic portion of the chain corresponds to 36–50 (NFSWLPAVVSHVMAE). A helical membrane pass occupies residues 51 to 71 (AGGSVFANMPLIFAIGVALGF). Topologically, residues 72–79 (TNNDGVSA) are cytoplasmic. A helical membrane pass occupies residues 80–100 (LAAVVAYGIMVKTMAVVAPLV). The Periplasmic portion of the chain corresponds to 101–111 (LHLPAEEIASK). Residues 112–132 (HLADTGVLGGIISGAIAAYMF) traverse the membrane as a helical segment. At 133 to 151 (NRFYRIKLPEYLGFFAGKR) the chain is on the cytoplasmic side. Residues 152-172 (FVPIISGLAAIFTGVVLSFIW) form a helical membrane-spanning segment. The Periplasmic segment spans residues 173–190 (PPIGSAIQTFSQWAAYQN). Residues 191–211 (PVVAFGIYGFIERCLVPFGLH) form a helical membrane-spanning segment. Topologically, residues 212–249 (HIWNVPFQMQIGEYTNAAGQVFHGDIPRYMAGDPTAGK) are cytoplasmic. The chain crosses the membrane as a helical span at residues 250-270 (LSGGFLFKMYGLPAAAIAIWH). The Periplasmic portion of the chain corresponds to 271-279 (SAKPENRAK). The chain crosses the membrane as a helical span at residues 280–300 (VGGIMISAALTSFLTGITEPI). Over 301 to 309 (EFSFMFVAP) the chain is Cytoplasmic. The chain crosses the membrane as a helical span at residues 310 to 330 (ILYIIHAILAGLAFPICILLG). The Periplasmic segment spans residues 331–355 (MRDGTSFSHGLIDFIVLSGNSSKLW). A helical transmembrane segment spans residues 356–376 (LFPIVGIGYAIVYYTIFRVLI). At 377-477 (KALDLKTPGR…TEMDEYIRNH (101 aa)) the chain is on the cytoplasmic side. The 79-residue stretch at 399-477 (SEMAPALVAA…TEMDEYIRNH (79 aa)) folds into the PTS EIIB type-1 domain. The Phosphocysteinsyse intermediate; for EIIB activity role is filled by Cys421. Cys421 is modified (phosphocysteine).

It localises to the cell inner membrane. It carries out the reaction N(pros)-phospho-L-histidyl-[protein] + D-glucose(out) = D-glucose 6-phosphate(in) + L-histidyl-[protein]. Functionally, the phosphoenolpyruvate-dependent sugar phosphotransferase system (sugar PTS), a major carbohydrate active transport system, catalyzes the phosphorylation of incoming sugar substrates concomitantly with their translocation across the cell membrane. The enzyme II complex composed of PtsG and Crr is involved in glucose transport. Also functions as a chemoreceptor monitoring the environment for changes in sugar concentration. This chain is PTS system glucose-specific EIICB component (ptsG), found in Escherichia coli O6:H1 (strain CFT073 / ATCC 700928 / UPEC).